The following is a 418-amino-acid chain: AP-3 complex subunit mu-1 (418 aa).

An MHD domain is found at 176 to 417; it reads NNEAYFDVVE…VTKAGKFQVR (242 aa).

The protein belongs to the adaptor complexes medium subunit family. In terms of assembly, adaptor protein complex 3 (AP-3) is a heterotetramer composed of two large adaptins (delta-type subunit AP3D1 and beta-type subunit AP3B1 or AP3B2), a medium adaptin (mu-type subunit AP3M1 or AP3M2) and a small adaptin (sigma-type subunit APS1 or AP3S2). Interacts with AGAP1. AP-3 associates with the BLOC-1 complex.

It is found in the golgi apparatus. The protein localises to the cytoplasmic vesicle membrane. Part of the AP-3 complex, an adaptor-related complex which is not clathrin-associated. The complex is associated with the Golgi region as well as more peripheral structures. It facilitates the budding of vesicles from the Golgi membrane and may be directly involved in trafficking to lysosomes. In concert with the BLOC-1 complex, AP-3 is required to target cargos into vesicles assembled at cell bodies for delivery into neurites and nerve terminals. The sequence is that of AP-3 complex subunit mu-1 (AP3M1) from Bos taurus (Bovine).